The following is a 314-amino-acid chain: Methionyl-tRNA formyltransferase (314 aa).

(6S)-5,6,7,8-tetrahydrofolate is bound at residue 110 to 113 (SLLP).

This sequence belongs to the Fmt family.

The enzyme catalyses L-methionyl-tRNA(fMet) + (6R)-10-formyltetrahydrofolate = N-formyl-L-methionyl-tRNA(fMet) + (6S)-5,6,7,8-tetrahydrofolate + H(+). Attaches a formyl group to the free amino group of methionyl-tRNA(fMet). The formyl group appears to play a dual role in the initiator identity of N-formylmethionyl-tRNA by promoting its recognition by IF2 and preventing the misappropriation of this tRNA by the elongation apparatus. In Bacillus mycoides (strain KBAB4) (Bacillus weihenstephanensis), this protein is Methionyl-tRNA formyltransferase.